Reading from the N-terminus, the 43-residue chain is Omega-agatoxin-Aa3c (43 aa).

3 disulfides stabilise this stretch: Cys-2-Cys-19, Cys-9-Cys-25, and Cys-27-Cys-38.

This sequence belongs to the neurotoxin 04 (omega-agtx) family. 03 (type II/III omega-agtx) subfamily. In terms of tissue distribution, expressed by the venom gland.

It localises to the secreted. Functionally, omega-agatoxins are antagonists of voltage-gated calcium channels (Cav). This is Omega-agatoxin-Aa3c from Agelenopsis aperta (North American funnel-web spider).